The primary structure comprises 234 residues: Arsenate respiratory reductase iron-sulfur subunit ArrB (234 aa).

3 consecutive 4Fe-4S ferredoxin-type domains span residues 3-32 (LGMV…NDGI), 48-79 (VKYT…KDKR), and 80-109 (GLTL…FNAA). [4Fe-4S] cluster-binding residues include Cys-12, Cys-15, Cys-18, Cys-22, Cys-57, Cys-60, Cys-65, Cys-69, Cys-89, Cys-92, Cys-95, Cys-99, Cys-164, Cys-167, Cys-179, and Cys-183.

Heterodimer composed of one large subunit (ArrA) and one small subunit (ArrB). [4Fe-4S] cluster serves as cofactor.

It is found in the periplasm. Its activity is regulated as follows. Phosphate is a competitive inhibitor. Component of the arsenate respiratory reductase (Arr) complex, which catalyzes the reduction of arsenate (As(V)) to arsenite (As(III)). ArrB is probably the electron transfer subunit. The periplasmic localization of this complex may allow the cell to couple arsenate reduction to energy production before arsenate can be transported to the cell cytoplasm and enter the ars detoxification pathway, an energy-requiring process. The sequence is that of Arsenate respiratory reductase iron-sulfur subunit ArrB from Shewanella sp. (strain ANA-3).